The following is a 248-amino-acid chain: 2,3-bisphosphoglycerate-dependent phosphoglycerate mutase (248 aa).

Substrate is bound by residues 8–15, 21–22, arginine 60, 87–90, lysine 98, 114–115, and 183–184; these read RHGESLWN, TG, EKHY, RR, and GN. Catalysis depends on histidine 9, which acts as the Tele-phosphohistidine intermediate. Catalysis depends on glutamate 87, which acts as the Proton donor/acceptor.

The protein belongs to the phosphoglycerate mutase family. BPG-dependent PGAM subfamily.

It catalyses the reaction (2R)-2-phosphoglycerate = (2R)-3-phosphoglycerate. The protein operates within carbohydrate degradation; glycolysis; pyruvate from D-glyceraldehyde 3-phosphate: step 3/5. Catalyzes the interconversion of 2-phosphoglycerate and 3-phosphoglycerate. This chain is 2,3-bisphosphoglycerate-dependent phosphoglycerate mutase, found in Porphyromonas gingivalis (strain ATCC 33277 / DSM 20709 / CIP 103683 / JCM 12257 / NCTC 11834 / 2561).